The sequence spans 872 residues: Metabotropic glutamate receptor 2 (872 aa).

A signal peptide spans 1-18; the sequence is MGSLLALLALLLLWGAVA. At 19-567 the chain is on the extracellular side; it reads EGPAKKVLTL…QEYIRWGDAW (549 aa). Cys50 and Cys92 are oxidised to a cystine. L-glutamate contacts are provided by Arg57, Arg61, Ser145, Ala166, and Thr168. N-linked (GlcNAc...) asparagine glycosylation is found at Asn203 and Asn286. Cystine bridges form between Cys234–Cys518, Cys355–Cys362, Cys400–Cys407, Cys500–Cys519, Cys504–Cys522, Cys525–Cys537, and Cys540–Cys553. Asp295 lines the L-glutamate pocket. An N-linked (GlcNAc...) asparagine glycan is attached at Asn338. Residue Lys377 coordinates L-glutamate. Asn402 carries N-linked (GlcNAc...) asparagine glycosylation. Asn547 carries N-linked (GlcNAc...) asparagine glycosylation. Residues 568–590 form a helical membrane-spanning segment; that stretch reads AVGPVTIACLGALATLFVLGVFV. Residues 591 to 604 are Cytoplasmic-facing; that stretch reads RHNATPVVKASGRE. Residues 605–625 form a helical membrane-spanning segment; the sequence is LCYILLGGVFLCYCMTFIFIA. Residues 626–636 are Extracellular-facing; it reads KPSTAVCTLRR. Cysteines 632 and 721 form a disulfide. Residues 637–655 traverse the membrane as a helical segment; the sequence is LGLGTAFSVCYSALLTKTN. At 656 to 679 the chain is on the cytoplasmic side; the sequence is RIARIFGGAREGAQRPRFISPASQ. The important for interaction with HTR2A stretch occupies residues 677-685; that stretch reads ASQVAICLA. The chain crosses the membrane as a helical span at residues 680–700; it reads VAICLALISGQLLIVVAWLVV. Over 701–725 the chain is Extracellular; sequence EAPGTGKETAPERREVVTLRCNHRD. The helical transmembrane segment at 726 to 747 threads the bilayer; sequence ASMLGSLAYNVLLIALCTLYAF. Topologically, residues 748-760 are cytoplasmic; it reads KTRKCPENFNEAK. Residues 761 to 783 form a helical membrane-spanning segment; the sequence is FIGFTMYTTCIIWLAFLPIFYVT. Over 784–793 the chain is Extracellular; that stretch reads SSDYRVQTTT. Residues 794 to 819 traverse the membrane as a helical segment; it reads MCVSVSLSGSVVLGCLFAPKLHIILF. Topologically, residues 820–872 are cytoplasmic; that stretch reads QPQKNVVSHRAPTSRFGSAAARASSSLGQGSGSQFVPTVCNGREVVDSTTSSL.

The protein belongs to the G-protein coupled receptor 3 family. Forms heterodimers with GRM3 or GRM4. Interacts with TAMALIN. Interacts with HTR2A. In terms of assembly, (Microbial infection) Interacts with H5N6 virus protein HA. As to quaternary structure, (Microbial infection) Interacts with rabies virus protein G. (Microbial infection) Interacts with SARS-CoV-2 virus spike protein S. Detected in brain cortex (at protein level). Widely expressed in different regions of the adult brain as well as in fetal brain.

It is found in the cell membrane. The protein resides in the synapse. It localises to the cell projection. Its subcellular location is the dendrite. Its function is as follows. Dimeric G protein-coupled receptor which is activated by the excitatory neurotransmitter L-glutamate. Plays critical roles in modulating synaptic transmission and neuronal excitability. Upon activation by glutamate, inhibits presynaptic calcium channels, reducing further glutamate release and dampening excitatory signaling. Mechanistically, ligand binding causes a conformation change that triggers signaling via guanine nucleotide-binding proteins (G proteins) and modulates the activity of down-stream effectors, such as adenylate cyclase. May mediate suppression of neurotransmission or may be involved in synaptogenesis or synaptic stabilization. In terms of biological role, (Microbial infection) Plays an important role in influenza virus internalization. Functionally, (Microbial infection) Acts as a host entry factor for rabies virus that hijacks the endocytosis of GRM2 to enter cells. (Microbial infection) Acts as a host entry factor for SARS-CoV-2 that hijacks the endocytosis of GRM2 to enter cells. The protein is Metabotropic glutamate receptor 2 of Homo sapiens (Human).